Consider the following 167-residue polypeptide: Alanine- and arginine-rich domain-containing protein (167 aa).

The interval 140 to 167 is disordered; that stretch reads LKKRQDQELASKPQSPQDKEMNSECGSA.

Preferentially expressed in testis both in embryo and adult. Expressed at much lower level in other tissues.

In Mus musculus (Mouse), this protein is Alanine- and arginine-rich domain-containing protein (Aard).